Consider the following 172-residue polypeptide: RTX-I toxin-activating lysine-acyltransferase ApxIC (172 aa).

Active-site residues include His24 and Asp93.

Belongs to the RTX toxin acyltransferase family. Homodimer.

Its subcellular location is the cytoplasm. The catalysed reaction is a fatty acyl-[ACP] + L-lysyl-[protein] = N(6)-(fatty acyl)-L-lysyl-[protein] + holo-[ACP] + H(+). Protein-lysine acyltransferase that catalyzes fatty acylation of the protoxin, thereby converting it to the active toxin. This chain is RTX-I toxin-activating lysine-acyltransferase ApxIC, found in Actinobacillus pleuropneumoniae (Haemophilus pleuropneumoniae).